The following is a 238-amino-acid chain: uncharacterized protein (238 aa).

Helical transmembrane passes span 75–95, 116–136, and 172–192; these read YAIFHIFLPFILTLLLYHNFY, IVLIFTYVMTVIIVYFSFSLI, and IQGLAHIILSLLLFILGLEVI. The disordered stretch occupies residues 200–238; the sequence is DVEMSSMRGQAITTEPASDNTMAEETDCNTSKDVESGSN. The segment covering 206–220 has biased composition (polar residues); that stretch reads MRGQAITTEPASDNT. The span at 229-238 shows a compositional bias: basic and acidic residues; the sequence is TSKDVESGSN.

It localises to the membrane. This is an uncharacterized protein from Schizosaccharomyces pombe (strain 972 / ATCC 24843) (Fission yeast).